Consider the following 400-residue polypeptide: Lysophospholipid transporter LplT (400 aa).

Helical transmembrane passes span 19-39 (VIVAQFLSAFGDNALLFATLA), 53-73 (VLQMVFVGAYILFAPFVGQIA), 91-111 (AGAAGVCLGINPFVGYTLVGI), 139-159 (LMEASTIAAILLGSVAGGVLA), 164-184 (IAALVACALAYAGAVAANLFI), 195-213 (SWRLSAMTRSFFCACVVLW), 227-247 (LFWGAGVTLRFLLVLWVPVAL), 257-277 (YLNAMVAVGIVVGAGAAAKLV), 281-301 (TVSRCMPAGILIGVVVAIFSL), 304-324 (ALLPAYALLLLIGMLGGFFVV), 352-372 (NSAMLLMLGLYSLAVLVGVPA), and 373-393 (VAIGIGFGVLFALAIAALWIW).

This sequence belongs to the major facilitator superfamily. LplT (TC 2.A.1.42) family.

It is found in the cell inner membrane. In terms of biological role, catalyzes the facilitated diffusion of 2-acyl-glycero-3-phosphoethanolamine (2-acyl-GPE) into the cell. The chain is Lysophospholipid transporter LplT from Salmonella schwarzengrund (strain CVM19633).